Consider the following 436-residue polypeptide: MSTGFFGDIQKVKYEGPDSTNPLAFRHYQPDEIVMGKRMEDHLRFAVAYWHTFTWPGGDPFGGQTFLRPWFEDTMKAAKLKADVAFEFFSLLGSPYYCFHDADVRPEGKTFAENTKNLNEIVDYFAEKQAATGTKLLWGTANLFSHRRYMSGAATNPDPDVFAFAAATVKTCIDATQKLGGENYVLWGGREGYETLLNTDIGRELDQLGRFLNLVVEYKHKIGYKGTILIEPKPQEPTKHQYDYDVATVYGFLKKHGLENEVKLNIEQGHAILAGHSFEHELALANALGIFGSIDMNRNDYQSGWDTDQFPNNVPEMALAYYHVLAGGGFKTGGTNFDSKLRRQSLDPADLLIGHIGGMDCCARGLKAAAKMIEDKALSQPLADRYAGWESAEAQKLFRGEYSLDEITHYVESHDVNPQPRSGKQELLENVVNRYV.

Active-site residues include histidine 100 and aspartate 103. Mg(2+) contacts are provided by glutamate 231, glutamate 267, histidine 270, aspartate 295, aspartate 306, aspartate 308, and aspartate 338.

The protein belongs to the xylose isomerase family. Homotetramer. Mg(2+) serves as cofactor.

The protein resides in the cytoplasm. It carries out the reaction alpha-D-xylose = alpha-D-xylulofuranose. The sequence is that of Xylose isomerase from Rhizobium johnstonii (strain DSM 114642 / LMG 32736 / 3841) (Rhizobium leguminosarum bv. viciae).